A 322-amino-acid polypeptide reads, in one-letter code: F-actin-capping protein subunit beta (322 aa).

It belongs to the F-actin-capping protein beta subunit family. Component of the F-actin capping complex, composed of a heterodimer of an alpha and a beta subunit.

Its subcellular location is the cytoplasm. The protein resides in the cytoskeleton. The protein localises to the actin patch. Functionally, F-actin-capping proteins bind in a Ca(2+)-independent manner to the fast growing ends of actin filaments (barbed end) thereby blocking the exchange of subunits at these ends. Unlike other capping proteins (such as gelsolin and severin), these proteins do not sever actin filaments. In Aspergillus fumigatus (strain ATCC MYA-4609 / CBS 101355 / FGSC A1100 / Af293) (Neosartorya fumigata), this protein is F-actin-capping protein subunit beta (cap2).